A 246-amino-acid chain; its full sequence is Sortase B (246 aa).

A helical membrane pass occupies residues Ser-5–Trp-24.

Belongs to the bacterial sortase family. Class B subfamily.

Its subcellular location is the cell membrane. In terms of biological role, transpeptidase that anchors surface proteins to the cell wall. Recognizes and modifies its substrate by proteolytic cleavage of a C-terminal sorting signal. Following cleavage, a covalent intermediate is formed via a thioester bond between the sortase and its substrate, which is then transferred and covalently attached to the cell wall. Catalyzes a cell wall sorting reaction in which a surface protein with the consensus sorting signal NP(Q/K)(T/S)(N/G/S)(D/A) is cleaved between the fourth and fifth residues, and the fourth position is linked to the cell wall. This is not the major sortase in Listeria, it seems to anchor only 2 proteins, Hbp2 (SvpA) and Hbp1. This Listeria monocytogenes serovar 1/2a (strain ATCC BAA-679 / EGD-e) protein is Sortase B.